A 638-amino-acid chain; its full sequence is Mediator of RNA polymerase II transcription subunit 17 (638 aa).

The tract at residues 1–21 is disordered; the sequence is MSDSFNLPLRPLTEKRERPDP.

The protein belongs to the Mediator complex subunit 17 family. Component of the Mediator complex.

Its subcellular location is the nucleus. Its function is as follows. Component of the Mediator complex, a coactivator involved in the regulated transcription of nearly all RNA polymerase II-dependent genes. Mediator functions as a bridge to convey information from gene-specific regulatory proteins to the basal RNA polymerase II transcription machinery. Mediator is recruited to promoters by direct interactions with regulatory proteins and serves as a scaffold for the assembly of a functional preinitiation complex with RNA polymerase II and the general transcription factors. This chain is Mediator of RNA polymerase II transcription subunit 17 (srb4), found in Aspergillus oryzae (strain ATCC 42149 / RIB 40) (Yellow koji mold).